A 945-amino-acid polypeptide reads, in one-letter code: Isoleucine--tRNA ligase (945 aa).

A compositionally biased stretch (basic and acidic residues) spans methionine 1–proline 10. Positions methionine 1 to threonine 21 are disordered. A 'HIGH' region motif is present at residues proline 66 to histidine 76. Glutamate 581 lines the L-isoleucyl-5'-AMP pocket. The 'KMSKS' region signature appears at lysine 622 to serine 626. Lysine 625 is a binding site for ATP. Zn(2+) is bound by residues cysteine 908, cysteine 911, cysteine 928, and cysteine 931.

This sequence belongs to the class-I aminoacyl-tRNA synthetase family. IleS type 1 subfamily. As to quaternary structure, monomer. The cofactor is Zn(2+).

Its subcellular location is the cytoplasm. It carries out the reaction tRNA(Ile) + L-isoleucine + ATP = L-isoleucyl-tRNA(Ile) + AMP + diphosphate. In terms of biological role, catalyzes the attachment of isoleucine to tRNA(Ile). As IleRS can inadvertently accommodate and process structurally similar amino acids such as valine, to avoid such errors it has two additional distinct tRNA(Ile)-dependent editing activities. One activity is designated as 'pretransfer' editing and involves the hydrolysis of activated Val-AMP. The other activity is designated 'posttransfer' editing and involves deacylation of mischarged Val-tRNA(Ile). In Burkholderia multivorans (strain ATCC 17616 / 249), this protein is Isoleucine--tRNA ligase.